Here is a 252-residue protein sequence, read N- to C-terminus: MQIIPAIDLLQGSCVRLHQGDYDQVTRFSEDPVAQALEWQRQGASRLHLVDLDGARSGEPTNDSAVRAITAALSIPVQLGGGVRSLERAEALLSFGLDRVILGTVALEQPELVEQLAARYPGRIVVGIDARNGKVATRGWITDTDTEATSLAKRFEGLGLAAIVSTDIATDGTLAGPNLTALRAMVEASSTPVIASGGIGTVSDLLSLLPVGVSGVIVGRALYDGTVILSEALQAVGDGRLQDASSSQSSPC.

Catalysis depends on Asp-8, which acts as the Proton acceptor. Catalysis depends on Asp-129, which acts as the Proton donor.

It belongs to the HisA/HisF family.

Its subcellular location is the cytoplasm. It catalyses the reaction 1-(5-phospho-beta-D-ribosyl)-5-[(5-phospho-beta-D-ribosylamino)methylideneamino]imidazole-4-carboxamide = 5-[(5-phospho-1-deoxy-D-ribulos-1-ylimino)methylamino]-1-(5-phospho-beta-D-ribosyl)imidazole-4-carboxamide. Its pathway is amino-acid biosynthesis; L-histidine biosynthesis; L-histidine from 5-phospho-alpha-D-ribose 1-diphosphate: step 4/9. The chain is 1-(5-phosphoribosyl)-5-[(5-phosphoribosylamino)methylideneamino] imidazole-4-carboxamide isomerase from Synechococcus sp. (strain RCC307).